A 501-amino-acid polypeptide reads, in one-letter code: Acetyl-coenzyme A carboxylase carboxyl transferase subunit beta, chloroplastic (501 aa).

Residues 231–501 form the CoA carboxyltransferase N-terminal domain; it reads LWIECENCYG…LIQNEKESRS (271 aa). Cys235, Cys238, Cys254, and Cys257 together coordinate Zn(2+). The segment at 235–257 adopts a C4-type zinc-finger fold; it reads CENCYGLNYKKILKSKMNICEHC.

Belongs to the AccD/PCCB family. Acetyl-CoA carboxylase is a heterohexamer composed of biotin carboxyl carrier protein, biotin carboxylase and 2 subunits each of ACCase subunit alpha and ACCase plastid-coded subunit beta (accD). Zn(2+) is required as a cofactor.

Its subcellular location is the plastid. It localises to the chloroplast stroma. The catalysed reaction is N(6)-carboxybiotinyl-L-lysyl-[protein] + acetyl-CoA = N(6)-biotinyl-L-lysyl-[protein] + malonyl-CoA. The protein operates within lipid metabolism; malonyl-CoA biosynthesis; malonyl-CoA from acetyl-CoA: step 1/1. Functionally, component of the acetyl coenzyme A carboxylase (ACC) complex. Biotin carboxylase (BC) catalyzes the carboxylation of biotin on its carrier protein (BCCP) and then the CO(2) group is transferred by the transcarboxylase to acetyl-CoA to form malonyl-CoA. In Lotus japonicus (Lotus corniculatus var. japonicus), this protein is Acetyl-coenzyme A carboxylase carboxyl transferase subunit beta, chloroplastic.